Reading from the N-terminus, the 648-residue chain is MTIPFSPNPEQINVSSVPATQAEVQVEYTLRTKSDAIEHTSQSNRLKDLAKDPWLRTTGNRHASSGTEIPSSEQTKSARILVVGAGYGGLLFAVRLLQSGFSLGDILLVDAAGGFGGTWYWNRYPGLMCDIESYIYMPLLEETGHIPSRKYVPGEELRGHAERIAEKWKLHTQTLFRTTISCLTWDENKTQWIATASQSNSESQESNSFVISADFAILANGTLSKPKIPDLPGVDDFAGHVFHTARWDYDYTGGSPSIPVMDRLKTKRVGVIGTGSTAVQVIPQLARWAGELTVFQRTPVAVGLQENQETDRIWWSEEIDKVGPGWQRKRCENFNAFITDTRQEKLEEVMKEDKVQDGWTRFPSFSAAIGGAHNLQPDFLQLVVKVDEERQKTARQHIKSTVHDPATAEALLNSTYSWCKRPCFHQGYYETYNLPHVKLVNTAGEGVTELTRGGVLLDGKEYELDLIVLATGYDIGSLCPADRAQISVRGRKGHLMNQKWAAGPATFHGVMTRDFPNLFFPGTSQAGVTANQSYMFDRAAEHVSYIIRQAYNHVAAGFANPKVCVEPSQEAEDWWTMETVARAKAFAATKICSSGSYTISARSGGSGNVEKTARHMPWGEGMASYVKILEEWRKKGHMDGLEIAWKGT.

FAD-binding positions include 118-121 (TWYW), 130-131 (DI), and Y136. Position 128–130 (128–130 (MCD)) interacts with NADP(+). NADP(+)-binding positions include 274 to 280 (TGSTAVQ) and 297 to 298 (RT).

The protein belongs to the FAD-binding monooxygenase family. FAD is required as a cofactor.

It participates in secondary metabolite biosynthesis; terpenoid biosynthesis. In terms of biological role, FAD-binding monooxygenase; part of the gene cluster that mediates the biosynthesis of terretonin, a fungal meroterpenoid that acts as a mycotoxin. The first step of the pathway is the synthesis of 3,5-dimethylorsellinic acid (DMOA) by the polyketide synthase trt4. DMOA is then prenylated into farnesyl-DMOA by the polyprenyl transferase trt2. Methylation by the methyltransferase trt5 then leads to farnesyl-DMOA methyl ester which is further subject to epoxidation by the FAD-dependent monooxygenase trt8 to yield epoxyfarnesyl-DMOA methyl ester. Cyclization of epoxyfarnesyl-DMOA methyl ester by the terpene cyclase trt1 leads to a tetracycle intermediate which is in turn converted to preterretonin. Dehydrogenase trt9 comes next to transform preterretonin to preterrenoid. The FAD-dependent monooxygenase trt3 is then required for the C-hydroxylation at C16 of preterrenoid to yield terrenoid. The cytochrome P450 trt6 catalyzes three successive oxidations to transform terrenoid into an unstable intermediate, which then undergoes the D-ring expansion and unusual rearrangement of the methoxy group to afford the core skeleton of terretonin. Trt14 catalyzes the D-ring expansion of terretonin involving intramolecular methoxy rearrangement as well as the hydrolysis of the expanded D-ring and the methyl ester moiety. Finally, the nonheme iron-dependent dioxygenase trt7 accomplishes the last two oxidation reactions steps to complete the biosynthesis of terretonin. Terretonin C is produced via spontaneous decarboxylation of the terretonin precursor. Another shunt product of the terretonin biosynthesis is dihydrofarnesyl-DMOA, derived from epoxyfarnesyl-DMOA through hydrolysis of the epoxide. This is FAD-binding monooxygenase trt3 from Aspergillus terreus (strain NIH 2624 / FGSC A1156).